A 336-amino-acid chain; its full sequence is Polyadenylate-binding protein-interacting protein 12 (336 aa).

Residues 14–47 (EAGGLISPSPPSSVTSQESGASSNNDHGGNGIHD) are disordered. Residues 25–40 (SSVTSQESGASSNNDH) show a composition bias toward polar residues. The short motif at 75–85 (KLNPMAKEFIP) is the PAM2-like element. The Bipartite nuclear localization signal signature appears at 122-134 (RRKKSFGQQGKRR). RRM domains lie at 150–225 (RTVY…PSKT) and 247–323 (RTIY…PSKT).

In terms of assembly, interacts with MPC. Expressed in roots, leaves, stems, flowers and siliques. Detected in flowers only in growing organs: gynoecium, petals, stamenal filaments, anther walls and ovules.

Its subcellular location is the nucleus. Its function is as follows. Binds nucleotic acids in vitro. The polypeptide is Polyadenylate-binding protein-interacting protein 12 (CID12) (Arabidopsis thaliana (Mouse-ear cress)).